The sequence spans 579 residues: Glutamine--tRNA ligase (579 aa).

The 'HIGH' region signature appears at P41–H51. Residues E42–N44 and H48–A54 each bind ATP. Residues D74 and Y218 each contribute to the L-glutamine site. ATP contacts are provided by residues T237, R285–L286, and M293–K295. The 'KMSKS' region signature appears at V292 to R296.

It belongs to the class-I aminoacyl-tRNA synthetase family. As to quaternary structure, monomer.

The protein resides in the cytoplasm. It catalyses the reaction tRNA(Gln) + L-glutamine + ATP = L-glutaminyl-tRNA(Gln) + AMP + diphosphate. This chain is Glutamine--tRNA ligase, found in Xanthomonas euvesicatoria pv. vesicatoria (strain 85-10) (Xanthomonas campestris pv. vesicatoria).